A 151-amino-acid polypeptide reads, in one-letter code: 3-hydroxyacyl-[acyl-carrier-protein] dehydratase FabZ (151 aa).

Residue His54 is part of the active site.

The protein belongs to the thioester dehydratase family. FabZ subfamily.

The protein resides in the cytoplasm. The enzyme catalyses a (3R)-hydroxyacyl-[ACP] = a (2E)-enoyl-[ACP] + H2O. In terms of biological role, involved in unsaturated fatty acids biosynthesis. Catalyzes the dehydration of short chain beta-hydroxyacyl-ACPs and long chain saturated and unsaturated beta-hydroxyacyl-ACPs. This Blochmanniella floridana protein is 3-hydroxyacyl-[acyl-carrier-protein] dehydratase FabZ.